The sequence spans 258 residues: Glutamate racemase (258 aa).

Residues 12 to 13 (DS) and 44 to 45 (YG) each bind substrate. Cys-75 (proton donor/acceptor) is an active-site residue. Residue 76–77 (NT) participates in substrate binding. Residue Cys-186 is the Proton donor/acceptor of the active site. 187–188 (TH) is a substrate binding site.

It belongs to the aspartate/glutamate racemases family.

The enzyme catalyses L-glutamate = D-glutamate. Its pathway is cell wall biogenesis; peptidoglycan biosynthesis. In terms of biological role, provides the (R)-glutamate required for cell wall biosynthesis. This chain is Glutamate racemase, found in Clostridium botulinum (strain Alaska E43 / Type E3).